A 177-amino-acid chain; its full sequence is MSSQNQDLVVVGKLGATYGIKGWLKVFSYTEQSESIFAYQPWLIKVKGEWKPIQIESWKKHGQGMVAKLEGLDIREDAQIFTNAEVAVHADQLPALSGEEFYWRELYGMSVVTTEGYDLGKVTDILETGSNDVLVVKANLKDAFGQKERLIPFLDEQVIKSIDRTAQRIEVDWDPGF.

One can recognise a PRC barrel domain in the interval 98-177 (GEEFYWRELY…RIEVDWDPGF (80 aa)).

The protein belongs to the RimM family. Binds ribosomal protein uS19.

It localises to the cytoplasm. Its function is as follows. An accessory protein needed during the final step in the assembly of 30S ribosomal subunit, possibly for assembly of the head region. Essential for efficient processing of 16S rRNA. May be needed both before and after RbfA during the maturation of 16S rRNA. It has affinity for free ribosomal 30S subunits but not for 70S ribosomes. This chain is Ribosome maturation factor RimM, found in Photobacterium profundum (strain SS9).